The chain runs to 202 residues: Cytochrome c oxidase assembly protein CtaG (202 aa).

The Cytoplasmic segment spans residues 1–14 (MSDKAAAPRKQGRN). Residues 15-37 (NGAVVMMCLSFVFGMGAMSYAAV) traverse the membrane as a helical; Signal-anchor for type II membrane protein segment. The Periplasmic segment spans residues 38 to 202 (PLYRIFCQVT…GGTVKIEKKL (165 aa)).

The protein belongs to the COX11/CtaG family.

It localises to the cell inner membrane. Exerts its effect at some terminal stage of cytochrome c oxidase synthesis, probably by being involved in the insertion of the copper B into subunit I. The chain is Cytochrome c oxidase assembly protein CtaG from Rhizobium etli (strain ATCC 51251 / DSM 11541 / JCM 21823 / NBRC 15573 / CFN 42).